A 107-amino-acid polypeptide reads, in one-letter code: MASTEEVSQERSENSIQVSMTKKPTFYARIGKRMFTGNEEKNPFDEVIITGLGNATKIAIGAASIMEKEDIGQIVKVQTAYFSSDRINRRIPKITIVLKKHPDFVAN.

An N6-acetyllysine mark is found at lysine 23 and lysine 32.

This sequence belongs to the histone-like Alba family. As to quaternary structure, homodimer. Interacts (acetylated and unacetylated) with Sir2A. Requires a divalent metal cation as cofactor. In terms of processing, acetylated. Exists in both acetylated and unacetylated forms but predominantly in an acetylated form. Deacetylated by Sir2A.

The protein localises to the nucleus. It is found in the chromosome. It localises to the telomere. The protein resides in the cytoplasm. Mild acetylation lowers protein interaction with DNA and high acetylation abolishes DNA-binding activity. DNA binding and endonuclease activity is modulated via deacetylation of Lys-23 by Sir2A. Inhibited in the presence of EDTA and EGTA. In terms of biological role, possesses DNA-binding and endonuclease activities. Binds DNA cooperatively in sequence-independent manner at the DNA minor groove. Exhibits apurinic/apyrimidinic site-driven endonuclease activity. Binds RNA; shows high affinity for poly(A) and a lower affinity for poly(U) templates. In vitro, prevents transcription after DNA binding. Associates with the telomeric region, the subtelomeric TARE6 repeat sequence and the var gene promoters. The sequence is that of Endonuclease ALBA3 from Plasmodium falciparum (isolate 3D7).